Reading from the N-terminus, the 114-residue chain is Large ribosomal subunit protein bL20 (114 aa).

The protein belongs to the bacterial ribosomal protein bL20 family.

Its function is as follows. Binds directly to 23S ribosomal RNA and is necessary for the in vitro assembly process of the 50S ribosomal subunit. It is not involved in the protein synthesizing functions of that subunit. This is Large ribosomal subunit protein bL20 from Amoebophilus asiaticus (strain 5a2).